A 1463-amino-acid polypeptide reads, in one-letter code: Regulating synaptic membrane exocytosis protein 1 (1463 aa).

A disordered region spans residues 1–26 (MSSAVGPRGPRPPTVPPPMQELPDLS). Residues 9-20 (GPRPPTVPPPMQ) are compositionally biased toward pro residues. Residues 22–205 (LPDLSHLTEE…TKSGAWFFGS (184 aa)) form the RabBD domain. The FYVE-type zinc-finger motif lies at 133 to 193 (KDDAPTCGIC…VCNLCRKQQE (61 aa)). The Zn(2+) site is built by cysteine 139, cysteine 142, cysteine 155, cysteine 158, cysteine 163, cysteine 166, cysteine 185, and cysteine 188. Positions 205–393 (SGPQQPSQDG…DVELESESVS (189 aa)) are disordered. Polar residues predominate over residues 206-222 (GPQQPSQDGTLSDTATG). The segment covering 227–240 (VPREKKARLQERSR) has biased composition (basic and acidic residues). Over residues 241–256 (SQTPLSTAAVSSQDTA) the composition is skewed to polar residues. A compositionally biased stretch (basic and acidic residues) spans 327–372 (ADERERKERRETRRLEKGRSQDYPDRLEKREDGRVAEDEKQRKEEE). Over residues 381 to 391 (SCEDVELESES) the composition is skewed to acidic residues. Serine 413 is subject to Phosphoserine. The PDZ domain maps to 440 to 526 (RTTMPKESGA…EPQVEIIVSR (87 aa)). Residues 533-567 (RIPESSHPPLESSSSSFESQKMERPSISVISPTSP) are disordered. Residues 535-551 (PESSHPPLESSSSSFES) show a composition bias toward low complexity. Residues serine 563 and serine 566 each carry the phosphoserine modification. Residues 577–700 (LPGQLSVKLW…ALLDDEPHWY (124 aa)) enclose the C2 1 domain. The segment at 705-856 (HDESSLPLPQ…YSSEPDSELL (152 aa)) is disordered. Position 716 is a phosphoserine (serine 716). Over residues 770–779 (ATTLTVPEQQ) the composition is skewed to polar residues. Residue serine 812 is modified to Phosphoserine. Residues 827 to 844 (RHHDASRSLADHRSRHAE) show a composition bias toward basic and acidic residues. The residue at position 866 (serine 866) is a Phosphoserine. Positions 874–1049 (SELQPSLDRA…RQLPQVPVRS (176 aa)) are disordered. Residues 928-941 (PENDRHSRKSERSS) show a composition bias toward basic and acidic residues. Polar residues predominate over residues 1021-1035 (QGSPTQSPPADTSFG). The residue at position 1023 (serine 1023) is a Phosphoserine. Threonine 1025 carries the phosphothreonine modification. 7 positions are modified to phosphoserine: serine 1027, serine 1079, serine 1081, serine 1082, serine 1110, serine 1111, and serine 1113. Residues 1104-1161 (DNASAKSSDSDVSDVSAISRASSTSRLSSTSFMSEQSERPRGRISSFTPKMQGRRMGT) form a disordered region. A compositionally biased stretch (low complexity) spans 1116–1137 (SDVSAISRASSTSRLSSTSFMS). Phosphoserine is present on serine 1187. Residues 1216–1266 (RSRSTSQLSQTESGHKKLKSTIQRSTETGMAAEMRKMVRQPSRESTDGSIN) are disordered. The segment covering 1248 to 1261 (EMRKMVRQPSREST) has biased composition (basic and acidic residues). One can recognise a C2 2 domain in the interval 1309 to 1427 (AMGDIQIGME…DLSSMVIGWY (119 aa)). Phosphoserine occurs at positions 1448, 1451, 1454, and 1463.

As to quaternary structure, binds SNAP25, SYT1 and CACNA1B. Interaction with SYT1 is enhanced by calcium ions. Interaction with SNAP25 is weaker in the presence of calcium ions. Interacts with TSPOAP1 and RIMBP2; interacts with PPFIA3 and PPFIA4. Interacts with ERC1. Interacts with RAB3A, RAB3B and RAB3D that have been activated by GTP-binding. Interacts with RAB3C, RAB10, RAB26 and RAB37. Binds UNC13A. Post-translationally, phosphorylated by BRSK1.

The protein localises to the cell membrane. The protein resides in the synapse. It is found in the presynaptic cell membrane. Functionally, rab effector involved in exocytosis. May act as scaffold protein that regulates neurotransmitter release at the active zone. Essential for maintaining normal probability of neurotransmitter release and for regulating release during short-term synaptic plasticity. Plays a role in dendrite formation by melanocytes. The protein is Regulating synaptic membrane exocytosis protein 1 (Rims1) of Mus musculus (Mouse).